The sequence spans 751 residues: ATP-dependent DNA helicase Hel308 (751 aa).

ATP contacts are provided by residues Gln20 and 39 to 46 (IPTASGKT). The 171-residue stretch at 26 to 196 (EGLLDKSKNF…WLNAKLVTDE (171 aa)) folds into the Helicase ATP-binding domain. The DEAH box signature appears at 143-146 (DEIH). Positions 235-435 (NLTDLIVDSV…VLRVHILGLI (201 aa)) constitute a Helicase C-terminal domain.

Belongs to the helicase family. Hel308 subfamily. In terms of assembly, monomer.

The enzyme catalyses Couples ATP hydrolysis with the unwinding of duplex DNA by translocating in the 3'-5' direction.. The catalysed reaction is ATP + H2O = ADP + phosphate + H(+). In terms of biological role, DNA-dependent ATPase and 3'-5' DNA helicase that may be involved in repair of stalled replication forks. The protein is ATP-dependent DNA helicase Hel308 of Methanococcus vannielii (strain ATCC 35089 / DSM 1224 / JCM 13029 / OCM 148 / SB).